A 189-amino-acid chain; its full sequence is Methylated-DNA--protein-cysteine methyltransferase (189 aa).

DNA-binding residues include tyrosine 128 and arginine 142. Cysteine 159 (nucleophile; methyl group acceptor) is an active-site residue. Serine 165 is a binding site for DNA.

The protein belongs to the MGMT family.

It is found in the nucleus. The catalysed reaction is a 6-O-methyl-2'-deoxyguanosine in DNA + L-cysteinyl-[protein] = S-methyl-L-cysteinyl-[protein] + a 2'-deoxyguanosine in DNA. It catalyses the reaction a 4-O-methyl-thymidine in DNA + L-cysteinyl-[protein] = a thymidine in DNA + S-methyl-L-cysteinyl-[protein]. In terms of biological role, involved in the cellular defense against the biological effects of O6-methylguanine (O6-MeG) and O4-methylthymine (O4-MeT) in DNA. Repairs the methylated nucleobase in DNA by stoichiometrically transferring the methyl group to a cysteine residue in the enzyme. This is a suicide reaction: the enzyme is irreversibly inactivated. The sequence is that of Methylated-DNA--protein-cysteine methyltransferase (MGT1) from Kluyveromyces lactis (strain ATCC 8585 / CBS 2359 / DSM 70799 / NBRC 1267 / NRRL Y-1140 / WM37) (Yeast).